Here is a 132-residue protein sequence, read N- to C-terminus: Small ribosomal subunit protein uS8 (132 aa).

Belongs to the universal ribosomal protein uS8 family. As to quaternary structure, part of the 30S ribosomal subunit. Contacts proteins S5 and S12.

In terms of biological role, one of the primary rRNA binding proteins, it binds directly to 16S rRNA central domain where it helps coordinate assembly of the platform of the 30S subunit. The protein is Small ribosomal subunit protein uS8 of Rhodococcus erythropolis (strain PR4 / NBRC 100887).